An 801-amino-acid polypeptide reads, in one-letter code: Probable methionine--tRNA ligase (801 aa).

The 'HIGH' region signature appears at 25–35 (PYVNNVPHLGN). Positions 347–351 (KFSKS) match the 'KMSKS' region motif. ATP is bound at residue Lys-350. The interval 606–633 (DKLKGTKLSDGGQKKEQKKQSGGSKSKN) is disordered. In terms of domain architecture, tRNA-binding spans 639–742 (TVAKLDIRVG…ESAAVGERVT (104 aa)).

Belongs to the class-I aminoacyl-tRNA synthetase family.

It localises to the cytoplasm. The catalysed reaction is tRNA(Met) + L-methionine + ATP = L-methionyl-tRNA(Met) + AMP + diphosphate. The polypeptide is Probable methionine--tRNA ligase (Oryza sativa subsp. japonica (Rice)).